A 381-amino-acid chain; its full sequence is Pre-mRNA-splicing factor cwf28 (381 aa).

A disordered region spans residues 1–21; the sequence is MKRKAVLEAFSDSEDEDEKKL. Phosphoserine occurs at positions 11 and 13. A coiled-coil region spans residues 104–157; the sequence is AADNEIVDWKANNSNEKAQNKIATNKESTDILPEEVQLVLNDLNDDVKSANSAN. The tract at residues 262-381 is disordered; it reads LNSQNEHTEV…DRSYRSTRTL (120 aa). Positions 274 to 285 are enriched in polar residues; the sequence is KSNSIDNLTPSS. Phosphoserine occurs at positions 275 and 277. Composition is skewed to basic and acidic residues over residues 287–297, 306–332, and 362–375; these read LFRKRSRDNNL, KHLD…EYHS, and SDRY…DRSY.

Belongs to the SPP2 family. As to quaternary structure, belongs to the 40S cdc5-associated complex (or cwf complex), a spliceosome sub-complex reminiscent of a late-stage spliceosome composed of the U2, U5 and U6 snRNAs and at least brr2, cdc5, cwf2/prp3, cwf3/syf1, cwf4/syf3, cwf5/ecm2, spp42/cwf6, cwf7/spf27, cwf8, cwf9, cwf10, cwf11, cwf12, prp45/cwf13, cwf14, cwf15, cwf16, cwf17, cwf18, cwf19, cwf20, cwf21, cwf22, cwf23, cwf24, cwf25, cwf26, cyp7/cwf27, cwf28, cwf29/ist3, lea1, msl1, prp5/cwf1, prp10, prp12/sap130, prp17, prp22, sap61, sap62, sap114, sap145, slu7, smb1, smd1, smd3, smf1, smg1 and syf2.

Its subcellular location is the nucleus. Functionally, involved in spliceosome maturation and the first step of pre-mRNA splicing. This chain is Pre-mRNA-splicing factor cwf28 (cwf28), found in Schizosaccharomyces pombe (strain 972 / ATCC 24843) (Fission yeast).